We begin with the raw amino-acid sequence, 226 residues long: Putative methyltransferase RP459 (226 aa).

Belongs to the methyltransferase superfamily.

The protein is Putative methyltransferase RP459 of Rickettsia prowazekii (strain Madrid E).